A 278-amino-acid chain; its full sequence is Orotidine 5'-phosphate decarboxylase (278 aa).

Substrate is bound by residues Asp-40, 62-64 (KTH), 93-102 (DRKFIDIGNT), Tyr-229, and Arg-247. The active-site Proton donor is the Lys-95.

The protein belongs to the OMP decarboxylase family.

It catalyses the reaction orotidine 5'-phosphate + H(+) = UMP + CO2. It participates in pyrimidine metabolism; UMP biosynthesis via de novo pathway; UMP from orotate: step 2/2. This is Orotidine 5'-phosphate decarboxylase (pyrG) from Aspergillus fumigatus (strain ATCC MYA-4609 / CBS 101355 / FGSC A1100 / Af293) (Neosartorya fumigata).